The chain runs to 276 residues: MSRYEKLFSSLAARKEGAFVPFIMLSDPNPDTALAIVRAAVAGGADALELGVPFSDPVADGPTIQASHIRALAGGATVDSAIEQIRRIRNEFPDLPIGMLIYGNVPFTRGLETFYSEFQEAGADSILLPDVPVREGAPFVAAAEKAGIDPIFIAPAQASEQTLQGVAQYSKGYIYAISRDGVTGTEKESETRGLDEVVNNVKRFGGAPILLGFGISTPQHVADAIAAGAAGAITGSALTKIVDAHLDEEGRPADGLAAAVTGFVSKMKAATKHAES.

Residues Glu49 and Asp60 each act as proton acceptor in the active site.

The protein belongs to the TrpA family. In terms of assembly, tetramer of two alpha and two beta chains.

The enzyme catalyses (1S,2R)-1-C-(indol-3-yl)glycerol 3-phosphate + L-serine = D-glyceraldehyde 3-phosphate + L-tryptophan + H2O. It participates in amino-acid biosynthesis; L-tryptophan biosynthesis; L-tryptophan from chorismate: step 5/5. Functionally, the alpha subunit is responsible for the aldol cleavage of indoleglycerol phosphate to indole and glyceraldehyde 3-phosphate. The sequence is that of Tryptophan synthase alpha chain from Corynebacterium aurimucosum (strain ATCC 700975 / DSM 44827 / CIP 107346 / CN-1) (Corynebacterium nigricans).